A 252-amino-acid polypeptide reads, in one-letter code: Type III pantothenate kinase (252 aa).

6–13 contributes to the ATP binding site; that stretch reads DIGNTNIV. Residue 107–110 coordinates substrate; sequence GADL. The active-site Proton acceptor is the Asp109. Asp129 contacts K(+). An ATP-binding site is contributed by Thr132. Position 184 (Thr184) interacts with substrate.

Belongs to the type III pantothenate kinase family. In terms of assembly, homodimer. Requires NH4(+) as cofactor. K(+) is required as a cofactor.

Its subcellular location is the cytoplasm. It carries out the reaction (R)-pantothenate + ATP = (R)-4'-phosphopantothenate + ADP + H(+). Its pathway is cofactor biosynthesis; coenzyme A biosynthesis; CoA from (R)-pantothenate: step 1/5. Functionally, catalyzes the phosphorylation of pantothenate (Pan), the first step in CoA biosynthesis. The chain is Type III pantothenate kinase from Bifidobacterium animalis subsp. lactis (strain AD011).